Reading from the N-terminus, the 1065-residue chain is Carbamoyl phosphate synthase large chain (1065 aa).

The segment at 1-401 is carboxyphosphate synthetic domain; it reads MPKRRDIETI…SLLKAVRSLE (401 aa). ATP is bound by residues arginine 129, arginine 169, glycine 175, glycine 176, arginine 208, isoleucine 210, glutamate 215, glycine 241, isoleucine 242, histidine 243, glutamine 284, and glutamate 298. Residues 133-327 enclose the ATP-grasp 1 domain; that stretch reads RALMNELGEP…IAKLAAKIAV (195 aa). Residues glutamine 284, glutamate 298, and asparagine 300 each coordinate Mg(2+). 3 residues coordinate Mn(2+): glutamine 284, glutamate 298, and asparagine 300. The tract at residues 402 to 546 is oligomerization domain; that stretch reads IGVHHLELNE…YSTYEEENES (145 aa). The interval 547–929 is carbamoyl phosphate synthetic domain; the sequence is IVTEKPSVIV…ALYKGLVASG (383 aa). The ATP-grasp 2 domain occupies 671–861; sequence EQALSELGIP…MANLATKAIL (191 aa). Arginine 707, arginine 746, isoleucine 748, glutamate 752, glycine 777, valine 778, histidine 779, serine 780, glutamine 820, and glutamate 832 together coordinate ATP. Residues glutamine 820, glutamate 832, and asparagine 834 each coordinate Mg(2+). Positions 820, 832, and 834 each coordinate Mn(2+). One can recognise an MGS-like domain in the interval 930–1065; that stretch reads IHIQPHGAVL…TAMTEGLVRS (136 aa). Residues 930–1065 are allosteric domain; that stretch reads IHIQPHGAVL…TAMTEGLVRS (136 aa).

It belongs to the CarB family. Composed of two chains; the small (or glutamine) chain promotes the hydrolysis of glutamine to ammonia, which is used by the large (or ammonia) chain to synthesize carbamoyl phosphate. Tetramer of heterodimers (alpha,beta)4. The cofactor is Mg(2+). Mn(2+) is required as a cofactor.

The catalysed reaction is hydrogencarbonate + L-glutamine + 2 ATP + H2O = carbamoyl phosphate + L-glutamate + 2 ADP + phosphate + 2 H(+). It catalyses the reaction hydrogencarbonate + NH4(+) + 2 ATP = carbamoyl phosphate + 2 ADP + phosphate + 2 H(+). Its pathway is amino-acid biosynthesis; L-arginine biosynthesis; carbamoyl phosphate from bicarbonate: step 1/1. It participates in pyrimidine metabolism; UMP biosynthesis via de novo pathway; (S)-dihydroorotate from bicarbonate: step 1/3. Large subunit of the glutamine-dependent carbamoyl phosphate synthetase (CPSase). CPSase catalyzes the formation of carbamoyl phosphate from the ammonia moiety of glutamine, carbonate, and phosphate donated by ATP, constituting the first step of 2 biosynthetic pathways, one leading to arginine and/or urea and the other to pyrimidine nucleotides. The large subunit (synthetase) binds the substrates ammonia (free or transferred from glutamine from the small subunit), hydrogencarbonate and ATP and carries out an ATP-coupled ligase reaction, activating hydrogencarbonate by forming carboxy phosphate which reacts with ammonia to form carbamoyl phosphate. The polypeptide is Carbamoyl phosphate synthase large chain (Bacillus caldolyticus).